A 329-amino-acid chain; its full sequence is Nuclear pore complex protein NUP35 (329 aa).

2 disordered regions span residues 48 to 105 (NFGG…GKGK) and 123 to 167 (VSGS…PPRE). The span at 123 to 139 (VSGSPSWWSQSKAGSST) shows a compositional bias: polar residues. Residues 183–264 (LDEEEWVTVY…KPVDPIQKQA (82 aa)) form the RRM Nup35-type domain. A disordered region spans residues 271 to 315 (NQGFMPLPPPSSTRNTARPLSRPQYLQNGSAFSPQPSGGAMASPS). Positions 282–306 (STRNTARPLSRPQYLQNGSAFSPQP) are enriched in polar residues.

The protein belongs to the Nup35 family. In terms of assembly, part of the nuclear pore complex (NPC). The NPC has an eight-fold symmetrical structure comprising a central transport channel and two rings, the cytoplasmic and nuclear rings, to which eight filaments are attached. The cytoplasmic filaments have loose ends, while the nuclear filaments are joined in a distal ring, forming a nuclear basket. NPCs are highly dynamic in configuration and composition, and can be devided in 3 subcomplexes, the NUP62 subcomplex, the NUP107-160 subcomplex and the NUP93 subcomplex, containing approximately 30 different nucleoporin proteins.

It is found in the nucleus. The protein resides in the nuclear pore complex. This chain is Nuclear pore complex protein NUP35, found in Arabidopsis thaliana (Mouse-ear cress).